A 55-amino-acid polypeptide reads, in one-letter code: MKRNQKEWESVSKKGLMKPGGTSIVKAAGCMGCWASKSIAMTRVCALPHPAMRAI.

Positions 1-29 (MKRNQKEWESVSKKGLMKPGGTSIVKAAG) are excised as a propeptide. The cysteines at positions 30 and 45 are disulfide-linked. The cyclopeptide (Cys-Ile) cross-link spans 30-55 (CMGCWASKSIAMTRVCALPHPAMRAI). A cross-link (2-(S-cysteinyl)-methionine (Cys-Met)) is located at residues 33-41 (CWASKSIAM).

Post-translationally, this is a cyclic peptide. The first step in SKF maturation is probably thioether bond formation.

It is found in the secreted. In terms of biological role, produces a 26-residue extracellular sporulation killing factor (SKF) that induces the lysis of other B.subtilis cells that have not entered the sporulation pathway, providing a source of nutrients to support sporulation, and at the same time delaying commitment to the energetically expensive and irreversible onset of sporulation. Can also inhibit growth of other bacteria at high concentrations. Addition of SKF to solid cultures induces killing, but it is much less effective than SDP (AC O34344). Has a role in protecting the secreted lipase LipA against proteolysis, either by modulating its folding or by acting as a protease inhibitor. In Bacillus subtilis (strain 168), this protein is Sporulation killing factor.